Consider the following 74-residue polypeptide: Large ribosomal subunit protein uL14c (74 aa).

It belongs to the universal ribosomal protein uL14 family. As to quaternary structure, part of the 50S ribosomal subunit.

Its subcellular location is the plastid. The protein resides in the chloroplast. Functionally, binds to 23S rRNA. The chain is Large ribosomal subunit protein uL14c (rpl14) from Oenothera ammophila (Evening primerose).